The primary structure comprises 106 residues: Small ribosomal subunit protein uS10 (106 aa).

The protein belongs to the universal ribosomal protein uS10 family. As to quaternary structure, part of the 30S ribosomal subunit.

Functionally, involved in the binding of tRNA to the ribosomes. This chain is Small ribosomal subunit protein uS10, found in Synechococcus sp. (strain CC9605).